The sequence spans 292 residues: 4-hydroxy-tetrahydrodipicolinate synthase (292 aa).

Thr-45 serves as a coordination point for pyruvate. The Proton donor/acceptor role is filled by Tyr-133. Residue Lys-161 is the Schiff-base intermediate with substrate of the active site. Ile-203 is a pyruvate binding site.

It belongs to the DapA family. In terms of assembly, homotetramer; dimer of dimers.

The protein resides in the cytoplasm. It catalyses the reaction L-aspartate 4-semialdehyde + pyruvate = (2S,4S)-4-hydroxy-2,3,4,5-tetrahydrodipicolinate + H2O + H(+). It participates in amino-acid biosynthesis; L-lysine biosynthesis via DAP pathway; (S)-tetrahydrodipicolinate from L-aspartate: step 3/4. Functionally, catalyzes the condensation of (S)-aspartate-beta-semialdehyde [(S)-ASA] and pyruvate to 4-hydroxy-tetrahydrodipicolinate (HTPA). This chain is 4-hydroxy-tetrahydrodipicolinate synthase, found in Shigella dysenteriae serotype 1 (strain Sd197).